The primary structure comprises 299 residues: Ribosomal protein L11 methyltransferase (299 aa).

4 residues coordinate S-adenosyl-L-methionine: threonine 144, glycine 165, aspartate 187, and asparagine 229.

It belongs to the methyltransferase superfamily. PrmA family.

It localises to the cytoplasm. It catalyses the reaction L-lysyl-[protein] + 3 S-adenosyl-L-methionine = N(6),N(6),N(6)-trimethyl-L-lysyl-[protein] + 3 S-adenosyl-L-homocysteine + 3 H(+). Functionally, methylates ribosomal protein L11. The chain is Ribosomal protein L11 methyltransferase from Teredinibacter turnerae (strain ATCC 39867 / T7901).